Here is a 433-residue protein sequence, read N- to C-terminus: 3-phosphoshikimate 1-carboxyvinyltransferase (433 aa).

3-phosphoshikimate is bound by residues lysine 22, serine 23, and arginine 27. Phosphoenolpyruvate is bound at residue lysine 22. Positions 95 and 123 each coordinate phosphoenolpyruvate. 3-phosphoshikimate contacts are provided by serine 166, glutamine 168, aspartate 314, and lysine 341. Residue glutamine 168 participates in phosphoenolpyruvate binding. Aspartate 314 functions as the Proton acceptor in the catalytic mechanism. 2 residues coordinate phosphoenolpyruvate: arginine 345 and arginine 386.

This sequence belongs to the EPSP synthase family. In terms of assembly, monomer.

The protein resides in the cytoplasm. It catalyses the reaction 3-phosphoshikimate + phosphoenolpyruvate = 5-O-(1-carboxyvinyl)-3-phosphoshikimate + phosphate. Its pathway is metabolic intermediate biosynthesis; chorismate biosynthesis; chorismate from D-erythrose 4-phosphate and phosphoenolpyruvate: step 6/7. Its function is as follows. Catalyzes the transfer of the enolpyruvyl moiety of phosphoenolpyruvate (PEP) to the 5-hydroxyl of shikimate-3-phosphate (S3P) to produce enolpyruvyl shikimate-3-phosphate and inorganic phosphate. This is 3-phosphoshikimate 1-carboxyvinyltransferase from Acidithiobacillus ferrooxidans (strain ATCC 23270 / DSM 14882 / CIP 104768 / NCIMB 8455) (Ferrobacillus ferrooxidans (strain ATCC 23270)).